The chain runs to 532 residues: MRKLTKMSAMLLASGLILTGCGGNKGLEEKKENKQLTYTTVKDIGDMNPHVYGGSMSAESMIYEPLVRNTKDGIKPLLAKKWDVSEDGKTYTFHLRDDVKFHDGTPFDADAVKKNIDAVQENKKLHSWLKISTLIDNVKVKDKYTVELNLKEAYQPALAELAMPRPYVFVSPKDFKNGTTKDGVKKFDGTGPFKLGEHKKDESADFNKNDQYWGEKSKLNKVQAKVMPAGETAFLSMKKGETNFAFTDDRGTDSLDKDSLKQLKDTGDYQVKRSQPMNTKMLVVNSGKKDNAVSDKTVRQAIGHMVNRDKIAKEILDGQEKPATQLFAKNVTDINFDMPTRKYDLKKAESLLDEAGWKKGKDSDVRQKDGKNLEMAMYYDKGSSSQKEQAEYLQAEFKKMGIKLNINGETSDKIAERRTSGDYDLMFNQTWGLLYDPQSTIAAFKEKNGYESATSGIENKDKIYNSIDDAFKIQNGKERSDAYKNILKQIDDEGIFIPISHGSMTVVAPKDLEKVSFTQSQYELPFNEMQYK.

A signal peptide spans 1 to 20; it reads MRKLTKMSAMLLASGLILTG. Cysteine 21 is lipidated: N-palmitoyl cysteine. Cysteine 21 is lipidated: S-diacylglycerol cysteine. Residues arginine 165, arginine 418, and asparagine 448 each contribute to the staphylopine site.

Belongs to the bacterial solute-binding protein 5 family. In terms of assembly, the complex is composed of two ATP-binding proteins (CntD and CntF), two transmembrane proteins (CntB and CntC) and a solute-binding protein (CntA).

It is found in the cell membrane. With respect to regulation, nickel/cobalt import is reduced in the presence of zinc. Its function is as follows. Part of the ABC transporter complex CntABCDF (Opp1) involved in the uptake of metal in complex with the metallophore staphylopine (StP). Involved in the import of divalent metals ions such as nickel, cobalt and zinc. Binds the metal via the metallophore StP, and transfers the StP-metal complex to the membrane-bound permease. Binds one molecule of StP/metal. Binds StP/Co(2+) and StP/Ni(2+) tighter than StP/Zn(2+). Plays a major role in nickel/cobalt import in zinc-depleted conditions. Contributes to virulence. Required for full urease activity in vitro. This Staphylococcus aureus (strain NCTC 8325 / PS 47) protein is Metal-staphylopine-binding protein CntA.